We begin with the raw amino-acid sequence, 92 residues long: Small ribosomal subunit protein uS19c (92 aa).

It belongs to the universal ribosomal protein uS19 family.

The protein resides in the plastid. The protein localises to the chloroplast. Functionally, protein S19 forms a complex with S13 that binds strongly to the 16S ribosomal RNA. This Lactuca sativa (Garden lettuce) protein is Small ribosomal subunit protein uS19c.